An 855-amino-acid chain; its full sequence is Transcription factor gaf1 (855 aa).

Residues 72-112 (KNLTPNGDSNTLTPDTFSDPTAPSSAQSVPPTSSAETTADN) show a composition bias toward polar residues. 6 disordered regions span residues 72–126 (KNLT…PAYS), 149–184 (TSFDESTAKSKKRSIADSHFPDPNAMQRPHDLESQP), 229–287 (SHNL…GFPS), 412–483 (PNSN…DMFS), 602–643 (NKNA…TRTT), and 680–768 (KKRN…SQSM). The span at 149–168 (TSFDESTAKSKKRSIADSHF) shows a compositional bias: basic and acidic residues. Position 150 is a phosphoserine (serine 150). Composition is skewed to low complexity over residues 240–250 (PANSNNSASPN) and 428–444 (NSSKSVGQGSSGVDSNQ). Positions 445-476 (ENAESFNPSISSHNSAEWASGETTGHSSNSPL) are enriched in polar residues. A compositionally biased stretch (basic and acidic residues) spans 614–623 (AEDKKGDANT). Low complexity-rich tracts occupy residues 625–643 (RANATNPTPTCTNCQTRTT) and 707–717 (SKSSSAKSTAA). The segment at 635–659 (CTNCQTRTTPLWRRSPDGQPLCNAC) adopts a GATA-type zinc-finger fold. Residues serine 727 and serine 729 each carry the phosphoserine modification. A compositionally biased stretch (low complexity) spans 755–767 (QQQSSENESKSQS).

Its subcellular location is the nucleus. Functionally, transcriptional activator. The sequence is that of Transcription factor gaf1 (gaf1) from Schizosaccharomyces pombe (strain 972 / ATCC 24843) (Fission yeast).